We begin with the raw amino-acid sequence, 458 residues long: Periphilin-1 (458 aa).

Composition is skewed to basic and acidic residues over residues 1-18 (MWSEGRYEYERIPRERAP) and 63-107 (EGRS…DGFR). Disordered stretches follow at residues 1-51 (MWSE…SYNR) and 63-284 (EGRS…LFED). The Nuclear localization signal motif lies at 103–109 (RDGFRRK). Lys-109 participates in a covalent cross-link: Glycyl lysine isopeptide (Lys-Gly) (interchain with G-Cter in SUMO2). Residues Ser-110, Ser-114, Ser-133, and Ser-140 each carry the phosphoserine modification. The segment covering 116–142 (YARERSPYKRDNTFFRESPVGRKDSPH) has biased composition (basic and acidic residues). Residues 143 to 154 (SRSGSSVSSRSY) are compositionally biased toward low complexity. Residue Lys-160 forms a Glycyl lysine isopeptide (Lys-Gly) (interchain with G-Cter in SUMO2) linkage. 2 positions are modified to phosphoserine: Ser-161 and Ser-167. A Glycyl lysine isopeptide (Lys-Gly) (interchain with G-Cter in SUMO2) cross-link involves residue Lys-180. Basic and acidic residues predominate over residues 181–194 (RQNEGNPERDKERP). Position 197 is a phosphoserine (Ser-197). Lys-199 is covalently cross-linked (Glycyl lysine isopeptide (Lys-Gly) (interchain with G-Cter in SUMO2)). Residues Ser-201 and Ser-205 each carry the phosphoserine modification. Residues 205 to 215 (SPSSGSAVSSS) show a composition bias toward low complexity. The segment covering 217-230 (VLDKPSRLTEKELA) has biased composition (basic and acidic residues). Lys-227 is covalently cross-linked (Glycyl lysine isopeptide (Lys-Gly) (interchain with G-Cter in SUMO2)). N6-acetyllysine; alternate is present on residues Lys-235 and Lys-240. Glycyl lysine isopeptide (Lys-Gly) (interchain with G-Cter in SUMO2); alternate cross-links involve residues Lys-235 and Lys-240. Over residues 237–246 (AAEKLEKSDE) the composition is skewed to basic and acidic residues. Ser-325 bears the Phosphoserine mark. Lys-328 participates in a covalent cross-link: Glycyl lysine isopeptide (Lys-Gly) (interchain with G-Cter in SUMO2). The segment at 345 to 406 (GQTWQQVPPV…TQLRRTTGAP (62 aa)) is disordered. Residues 377–386 (PQPPQAPQPL) show a composition bias toward pro residues. The span at 388–398 (PRKKRVRRTTQ) shows a compositional bias: basic residues. Lys-453 participates in a covalent cross-link: Glycyl lysine isopeptide (Lys-Gly) (interchain with G-Cter in SUMO2).

As to quaternary structure, homodimer. Component of the HUSH complex; at least composed of TASOR, PPHLN1 and MPHOSPH8. Interacts with SIN3A and HDAC1. May interact with PPL. Substrate of transglutaminase (in vitro). As to expression, ubiquitous.

The protein resides in the nucleus. It localises to the cytoplasm. Its subcellular location is the chromosome. Functionally, component of the HUSH complex, a multiprotein complex that mediates epigenetic repression. The HUSH complex is recruited to genomic loci rich in H3K9me3 and is probably required to maintain transcriptional silencing by promoting recruitment of SETDB1, a histone methyltransferase that mediates further deposition of H3K9me3. In the HUSH complex, contributes to the maintenance of the complex at chromatin. Acts as a transcriptional corepressor and regulates the cell cycle, probably via the HUSH complex. The HUSH complex is also involved in the silencing of unintegrated retroviral DNA: some part of the retroviral DNA formed immediately after infection remains unintegrated in the host genome and is transcriptionally repressed. May be involved in epithelial differentiation by contributing to epidermal integrity and barrier formation. This is Periphilin-1 from Homo sapiens (Human).